The primary structure comprises 238 residues: Purine nucleoside phosphorylase DeoD-type (238 aa).

His4 lines the a purine D-ribonucleoside pocket. Phosphate is bound by residues Gly20, Arg24, Arg43, and 87–90; that span reads RVGS. A purine D-ribonucleoside contacts are provided by residues 179 to 181 and 203 to 204; these read EME and SD. Asp204 (proton donor) is an active-site residue.

It belongs to the PNP/UDP phosphorylase family. In terms of assembly, homohexamer; trimer of homodimers.

It catalyses the reaction a purine D-ribonucleoside + phosphate = a purine nucleobase + alpha-D-ribose 1-phosphate. It carries out the reaction a purine 2'-deoxy-D-ribonucleoside + phosphate = a purine nucleobase + 2-deoxy-alpha-D-ribose 1-phosphate. Its function is as follows. Catalyzes the reversible phosphorolytic breakdown of the N-glycosidic bond in the beta-(deoxy)ribonucleoside molecules, with the formation of the corresponding free purine bases and pentose-1-phosphate. The polypeptide is Purine nucleoside phosphorylase DeoD-type (Haemophilus ducreyi (strain 35000HP / ATCC 700724)).